The sequence spans 113 residues: Probable 4-amino-4-deoxy-L-arabinose-phosphoundecaprenol flippase subunit ArnE (113 aa).

A run of 3 helical transmembrane segments spans residues 39–59 (IFWLITAIAMLGFGMLFWLRL), 62–82 (ILPLSIAYPMLSINFIVVTLI), and 91–111 (VNVKHWVGIASIMLGIVLMSM). The region spanning 42–111 (LITAIAMLGF…IMLGIVLMSM (70 aa)) is the EamA domain.

This sequence belongs to the ArnE family. In terms of assembly, heterodimer of ArnE and ArnF.

The protein localises to the cell inner membrane. It functions in the pathway bacterial outer membrane biogenesis; lipopolysaccharide biosynthesis. Translocates 4-amino-4-deoxy-L-arabinose-phosphoundecaprenol (alpha-L-Ara4N-phosphoundecaprenol) from the cytoplasmic to the periplasmic side of the inner membrane. This chain is Probable 4-amino-4-deoxy-L-arabinose-phosphoundecaprenol flippase subunit ArnE, found in Proteus mirabilis (strain HI4320).